We begin with the raw amino-acid sequence, 160 residues long: MKKSIFSKKLLVSFGSLVALASIPLIAISCGQTNTDKSQQPGSGSSTSGDQSGTTTGGHSGSGTSTSGGQSGTTSGSGTTTGEQTETAPKSPESGSQEATPKSPESGSQEATPKSPESGSQEAAPKSSESGSQEAAPKSSESGSQEAAPKSSESGSQKTT.

Residues 1 to 29 (MKKSIFSKKLLVSFGSLVALASIPLIAIS) form the signal peptide. A lipid anchor (N-palmitoyl cysteine) is attached at Cys-30. Cys-30 carries S-diacylglycerol cysteine lipidation. The tract at residues 32 to 160 (QTNTDKSQQP…SSESGSQKTT (129 aa)) is disordered. Low complexity-rich tracts occupy residues 38–54 (SQQP…QSGT) and 62–87 (SGTS…QTET). 6 tandem repeats follow at residues 86-97 (ETAPKSPESGSQ), 98-109 (EATPKSPESGSQ), 110-121 (EATPKSPESGSQ), 122-133 (EAAPKSSESGSQ), 134-145 (EAAPKSSESGSQ), and 146-157 (EAAPKSSESGSQ). The interval 86 to 157 (ETAPKSPESG…APKSSESGSQ (72 aa)) is 6 X 12 AA tandem repeats. The span at 93–160 (ESGSQEATPK…SSESGSQKTT (68 aa)) shows a compositional bias: polar residues.

It is found in the cell membrane. Functionally, responsible for the antigenic diversity for host adaptation. The protein is Variant surface antigen C (vlpC) of Mesomycoplasma hyorhinis (Mycoplasma hyorhinis).